Reading from the N-terminus, the 740-residue chain is Phosphoribosylformylglycinamidine synthase subunit PurL (740 aa).

Residue histidine 54 is part of the active site. Residues tyrosine 57 and lysine 96 each contribute to the ATP site. Glutamate 98 is a Mg(2+) binding site. Residues 99 to 102 and arginine 121 contribute to the substrate site; that span reads SHNH. The Proton acceptor role is filled by histidine 100. Aspartate 122 lines the Mg(2+) pocket. Residue glutamine 245 participates in substrate binding. Position 273 (aspartate 273) interacts with Mg(2+). 317-319 provides a ligand contact to substrate; sequence ESQ. Positions 499 and 536 each coordinate ATP. Asparagine 537 contacts Mg(2+). Residue serine 539 coordinates substrate.

The protein belongs to the FGAMS family. As to quaternary structure, monomer. Part of the FGAM synthase complex composed of 1 PurL, 1 PurQ and 2 PurS subunits.

The protein localises to the cytoplasm. The catalysed reaction is N(2)-formyl-N(1)-(5-phospho-beta-D-ribosyl)glycinamide + L-glutamine + ATP + H2O = 2-formamido-N(1)-(5-O-phospho-beta-D-ribosyl)acetamidine + L-glutamate + ADP + phosphate + H(+). It functions in the pathway purine metabolism; IMP biosynthesis via de novo pathway; 5-amino-1-(5-phospho-D-ribosyl)imidazole from N(2)-formyl-N(1)-(5-phospho-D-ribosyl)glycinamide: step 1/2. Functionally, part of the phosphoribosylformylglycinamidine synthase complex involved in the purines biosynthetic pathway. Catalyzes the ATP-dependent conversion of formylglycinamide ribonucleotide (FGAR) and glutamine to yield formylglycinamidine ribonucleotide (FGAM) and glutamate. The FGAM synthase complex is composed of three subunits. PurQ produces an ammonia molecule by converting glutamine to glutamate. PurL transfers the ammonia molecule to FGAR to form FGAM in an ATP-dependent manner. PurS interacts with PurQ and PurL and is thought to assist in the transfer of the ammonia molecule from PurQ to PurL. The sequence is that of Phosphoribosylformylglycinamidine synthase subunit PurL from Anoxybacillus flavithermus (strain DSM 21510 / WK1).